We begin with the raw amino-acid sequence, 129 residues long: Protein Turandot C (129 aa).

The signal sequence occupies residues 1 to 21; that stretch reads MNASISLLCLALLLISPFCLG.

It belongs to the Turandot family.

Its subcellular location is the secreted. Its function is as follows. A humoral factor that may play a role in stress tolerance. In Drosophila melanogaster (Fruit fly), this protein is Protein Turandot C.